The sequence spans 514 residues: Maltose/maltodextrin transport system permease protein MalF (514 aa).

At 1–16 (MDVIKKKHWWQSDALK) the chain is on the cytoplasmic side. A helical membrane pass occupies residues 17–36 (WSVLGLLGLLVGYLVVLMYA). At 37–39 (QGE) the chain is on the periplasmic side. Residues 40–58 (YLFAITTLILSSAGLYIFA) traverse the membrane as a helical segment. Topologically, residues 59-66 (NRKAYAWR) are cytoplasmic. Residues 67–92 (YVYPGMAGMGLFVLFPLVCTIAIAFT) form a helical membrane-spanning segment. Residues 93–275 (NYSSTNQLTF…RVFTDEGIQK (183 aa)) lie on the Periplasmic side of the membrane. Residues 276–306 (PFLAIFVWTVVFSLITVFLTVAVGMVLACLV) traverse the membrane as a helical segment. Residues 281–505 (FVWTVVFSLI…LLVGALAIVN (225 aa)) enclose the ABC transmembrane type-1 domain. Over 307–318 (QWEALRGKAVYR) the chain is Cytoplasmic. A helical transmembrane segment spans residues 319–336 (VLLILPYAVPSFISILIF). The Periplasmic segment spans residues 337–369 (KGLFNQSFGEINMMLSALFGVKPAWFSDPTTAR). Residues 370-392 (TMLIIVNTWLGYPYMMILCMGLL) traverse the membrane as a helical segment. At 393–425 (KAIPDDLYEASAMDGAGPFQNFFKITLPLLIKP) the chain is on the cytoplasmic side. Residues 426 to 452 (LTPLMIASFAFNFNNFVLIQLLTNGGP) form a helical membrane-spanning segment. Over 453 to 483 (DRLGTTTPAGYTDLLVNYTYRIAFEGGGGQD) the chain is Periplasmic. A helical transmembrane segment spans residues 484–505 (FGLAAAIATLIFLLVGALAIVN). Residues 506–514 (LKATRMKFD) lie on the Cytoplasmic side of the membrane.

Belongs to the binding-protein-dependent transport system permease family. MalFG subfamily. The complex is composed of two ATP-binding proteins (MalK), two transmembrane proteins (MalG and MalF) and a solute-binding protein (MalE). Protein stability and stable complex formation require YidC.

The protein resides in the cell inner membrane. In terms of biological role, part of the ABC transporter complex MalEFGK involved in maltose/maltodextrin import. Probably responsible for the translocation of the substrate across the membrane. This chain is Maltose/maltodextrin transport system permease protein MalF, found in Escherichia coli (strain K12).